The chain runs to 439 residues: Iron-sulfur cluster assembly factor IBA57 homolog, mitochondrial (439 aa).

The transit peptide at 1 to 72 directs the protein to the mitochondrion; the sequence is MQPATRSIAV…RLISVSGPDA (72 aa).

Belongs to the GcvT family. CAF17/IBA57 subfamily.

Its subcellular location is the mitochondrion matrix. The chain is Iron-sulfur cluster assembly factor IBA57 homolog, mitochondrial (caf-17) from Neurospora crassa (strain ATCC 24698 / 74-OR23-1A / CBS 708.71 / DSM 1257 / FGSC 987).